A 98-amino-acid polypeptide reads, in one-letter code: Phosphoribosyl-ATP pyrophosphatase (98 aa).

The protein belongs to the PRA-PH family.

It is found in the cytoplasm. It catalyses the reaction 1-(5-phospho-beta-D-ribosyl)-ATP + H2O = 1-(5-phospho-beta-D-ribosyl)-5'-AMP + diphosphate + H(+). The protein operates within amino-acid biosynthesis; L-histidine biosynthesis; L-histidine from 5-phospho-alpha-D-ribose 1-diphosphate: step 2/9. In Pelotomaculum thermopropionicum (strain DSM 13744 / JCM 10971 / SI), this protein is Phosphoribosyl-ATP pyrophosphatase.